The primary structure comprises 396 residues: Endo-1,4-beta-xylanase A (396 aa).

Residues 1 to 28 form the signal peptide; that stretch reads MITLFRKPFVAGLAISLLVGGGIGNVAA. The GH10 domain maps to 51–396; the sequence is AWQVASLSER…VKPAYWRIID (346 aa). The active-site Proton donor is the Glu195. Glu301 (nucleophile) is an active-site residue.

This sequence belongs to the glycosyl hydrolase 10 (cellulase F) family.

Its subcellular location is the secreted. It carries out the reaction Endohydrolysis of (1-&gt;4)-beta-D-xylosidic linkages in xylans.. Its pathway is glycan degradation; xylan degradation. This Halalkalibacterium halodurans (strain ATCC BAA-125 / DSM 18197 / FERM 7344 / JCM 9153 / C-125) (Bacillus halodurans) protein is Endo-1,4-beta-xylanase A (xynA).